The following is a 150-amino-acid chain: MSQLSRILLLNGPNLNMLGAREPKHYGTLSLAAIEANVQALAAKNNIELECFQANSEEKLIDKIHQSFKKVDFILINPAAFTHTSVALRDALLAVAIPFVEIHLSNIHKREPFRHHSYFSDVAEGVICGLGAKGYECAFEFAVEFLAKKA.

Residue Tyr-26 is the Proton acceptor of the active site. Substrate is bound by residues Asn-77, His-83, and Asp-90. His-103 (proton donor) is an active-site residue. Residues 104-105 and Arg-114 contribute to the substrate site; that span reads LS.

Belongs to the type-II 3-dehydroquinase family. As to quaternary structure, homododecamer.

The enzyme catalyses 3-dehydroquinate = 3-dehydroshikimate + H2O. The protein operates within metabolic intermediate biosynthesis; chorismate biosynthesis; chorismate from D-erythrose 4-phosphate and phosphoenolpyruvate: step 3/7. Its function is as follows. Catalyzes a trans-dehydration via an enolate intermediate. The sequence is that of 3-dehydroquinate dehydratase from Mannheimia succiniciproducens (strain KCTC 0769BP / MBEL55E).